We begin with the raw amino-acid sequence, 294 residues long: Nucleotide-binding protein CA_C0511 (294 aa).

Residue 8–15 (GLSGAGKT) coordinates ATP. 59–62 (DIRG) lines the GTP pocket.

Belongs to the RapZ-like family.

In terms of biological role, displays ATPase and GTPase activities. This chain is Nucleotide-binding protein CA_C0511, found in Clostridium acetobutylicum (strain ATCC 824 / DSM 792 / JCM 1419 / IAM 19013 / LMG 5710 / NBRC 13948 / NRRL B-527 / VKM B-1787 / 2291 / W).